The following is an 88-amino-acid chain: Cell division topological specificity factor (88 aa).

This sequence belongs to the MinE family.

Functionally, prevents the cell division inhibition by proteins MinC and MinD at internal division sites while permitting inhibition at polar sites. This ensures cell division at the proper site by restricting the formation of a division septum at the midpoint of the long axis of the cell. This Clostridium botulinum (strain Alaska E43 / Type E3) protein is Cell division topological specificity factor.